The chain runs to 219 residues: Casparian strip membrane protein 3 (219 aa).

Positions 1–43 are disordered; it reads MDPGREDEVPLAATSPESRRTRSNGRGKATVGDAPPPAETVVS. The Cytoplasmic segment spans residues 1 to 57; sequence MDPGREDEVPLAATSPESRRTRSNGRGKATVGDAPPPAETVVSTKAAPLPTGGWKKG. The chain crosses the membrane as a helical span at residues 58–78; the sequence is IAILDFILRLGAIGAAMGASI. At 79–108 the chain is on the extracellular side; sequence LMGTNEQILPFFTQFLQFHAQWDDFPVFKL. Residues 109-129 form a helical membrane-spanning segment; it reads FVVLNALAGGFLILSLPLSIV. Topologically, residues 130-147 are cytoplasmic; sequence CIVRPLAVGPRFLLLITD. The helical transmembrane segment at 148–168 threads the bilayer; that stretch reads LVNMATVIAAASAAAAIVYVA. Residues 169–193 lie on the Extracellular side of the membrane; that stretch reads HNGSQDANWIAICQQFTDFCQGTSE. Asn170 is a glycosylation site (N-linked (GlcNAc...) asparagine). The helical transmembrane segment at 194–214 threads the bilayer; that stretch reads AVVVSFVAAVFLVCLIVVSTL. Residues 215 to 219 lie on the Cytoplasmic side of the membrane; that stretch reads ALKRT.

The protein belongs to the Casparian strip membrane proteins (CASP) family. Homodimer and heterodimers.

Its subcellular location is the cell membrane. Its function is as follows. Regulates membrane-cell wall junctions and localized cell wall deposition. Required for establishment of the Casparian strip membrane domain (CSD) and the subsequent formation of Casparian strips, a cell wall modification of the root endodermis that determines an apoplastic barrier between the intraorganismal apoplasm and the extraorganismal apoplasm and prevents lateral diffusion. This chain is Casparian strip membrane protein 3, found in Lotus japonicus (Lotus corniculatus var. japonicus).